The following is a 472-amino-acid chain: Inhibitor of Apoptosis OPG037 (472 aa).

ANK repeat units lie at residues 97–126, 130–161, 233–263, 267–297, 322–351, and 353–377; these read DGNY…DPNA, HNKT…KINN, DGNT…DVNK, FGDS…VITD, YDST…ICED, and MYYA…SVDF.

This sequence belongs to the orthopoxvirus OPG037 protein family. As to quaternary structure, may interact with host caspase-9-Apaf-1 complex.

It is found in the host cytoplasm. Its function is as follows. Inhibits host apoptosis. Acts by associating with host apoptosome. In Vaccinia virus (strain Western Reserve) (VACV), this protein is Inhibitor of Apoptosis OPG037 (OPG037).